Consider the following 610-residue polypeptide: DNA-directed RNA polymerase III subunit RPC3 (610 aa).

A leucine-zipper region spans residues 538–559; the sequence is LVYNMAEIVRNIQNFKMENKIL.

This sequence belongs to the RNA polymerase beta chain family. Component of the RNA polymerase III (Pol III) complex consisting of 17 subunits.

It is found in the nucleus. Functionally, DNA-dependent RNA polymerase catalyzes the transcription of DNA into RNA using the four ribonucleoside triphosphates as substrates. Specific core component of RNA polymerase III which synthesizes small RNAs, such as 5S rRNA and tRNAs. The protein is DNA-directed RNA polymerase III subunit RPC3 (RPC82) of Lodderomyces elongisporus (strain ATCC 11503 / CBS 2605 / JCM 1781 / NBRC 1676 / NRRL YB-4239) (Yeast).